A 465-amino-acid polypeptide reads, in one-letter code: Putative adhesin P1-like protein MPN_286 (465 aa).

Disordered stretches follow at residues 9-48 (GNGHRYGNDHRGSNSSTSGVTTQGQQSQNASGTEPASTFS), 59-78 (QGTLGGSQTTTTGKDIPKWP), and 93-167 (WRND…LPPN). Over residues 21 to 37 (SNSSTSGVTTQGQQSQN) the composition is skewed to low complexity. Polar residues predominate over residues 38 to 48 (ASGTEPASTFS). Low complexity predominate over residues 111 to 131 (TSATGSGQQGSSSGTTNSAGN). Basic and acidic residues predominate over residues 135 to 144 (LKQDKVDKSG). Over residues 145-156 (DSVTVAETTSGD) the composition is skewed to polar residues. The segment covering 157–167 (NLTNYTNLPPN) has biased composition (low complexity).

The protein belongs to the adhesin P1 family.

The sequence is that of Putative adhesin P1-like protein MPN_286 from Mycoplasma pneumoniae (strain ATCC 29342 / M129 / Subtype 1) (Mycoplasmoides pneumoniae).